Reading from the N-terminus, the 654-residue chain is C6 finger domain transcription factor nscR (654 aa).

The zn(2)-C6 fungal-type DNA-binding region spans 17–43 (CELCRERKVKCDKLDPCTNCSSAGVIC).

The protein resides in the nucleus. Functionally, transcription factor that specifically regulates the neosartoricin B biosynthesis gene cluster. This Trichophyton verrucosum (strain HKI 0517) protein is C6 finger domain transcription factor nscR.